The primary structure comprises 407 residues: Tryptophan synthase beta chain (407 aa).

Lys91 carries the post-translational modification N6-(pyridoxal phosphate)lysine.

The protein belongs to the TrpB family. Tetramer of two alpha and two beta chains. Requires pyridoxal 5'-phosphate as cofactor.

It carries out the reaction (1S,2R)-1-C-(indol-3-yl)glycerol 3-phosphate + L-serine = D-glyceraldehyde 3-phosphate + L-tryptophan + H2O. It participates in amino-acid biosynthesis; L-tryptophan biosynthesis; L-tryptophan from chorismate: step 5/5. The beta subunit is responsible for the synthesis of L-tryptophan from indole and L-serine. The protein is Tryptophan synthase beta chain of Streptococcus pneumoniae serotype 2 (strain D39 / NCTC 7466).